A 488-amino-acid polypeptide reads, in one-letter code: Kynurenine 3-monooxygenase 2 (488 aa).

Belongs to the aromatic-ring hydroxylase family. KMO subfamily. It depends on FAD as a cofactor.

It localises to the mitochondrion outer membrane. It catalyses the reaction L-kynurenine + NADPH + O2 + H(+) = 3-hydroxy-L-kynurenine + NADP(+) + H2O. The protein operates within cofactor biosynthesis; NAD(+) biosynthesis; quinolinate from L-kynurenine: step 1/3. Its function is as follows. Catalyzes the hydroxylation of L-kynurenine (L-Kyn) to form 3-hydroxy-L-kynurenine (L-3OHKyn). Required for synthesis of quinolinic acid. This Aspergillus niger (strain ATCC MYA-4892 / CBS 513.88 / FGSC A1513) protein is Kynurenine 3-monooxygenase 2 (bna4-2).